A 156-amino-acid chain; its full sequence is ADP-ribosylation factor-like protein 2-binding protein (156 aa).

Belongs to the ARL2BP family.

It is found in the cytoplasm. The protein resides in the mitochondrion intermembrane space. Its subcellular location is the cytoskeleton. The protein localises to the microtubule organizing center. It localises to the centrosome. It is found in the nucleus. The protein resides in the spindle. Its subcellular location is the cilium basal body. Its function is as follows. Plays a role as an effector of the ADP-ribosylation factor-like protein 2, ARL2. This Xenopus laevis (African clawed frog) protein is ADP-ribosylation factor-like protein 2-binding protein (arl2bp).